Consider the following 374-residue polypeptide: Probable inactive patatin-3-Kuras 1 (374 aa).

The signal sequence occupies residues 1-11 (MMLATTSSTFA). A PNPLA domain is found at 20 to 217 (LSIDGGGIKG…AAVDPSLLSI (198 aa)). The GXGXXG signature appears at 24 to 29 (GGGIKG). Residues asparagine 48 and asparagine 191 are each glycosylated (N-linked (GlcNAc...) asparagine). Aspartate 204 functions as the Proton acceptor in the catalytic mechanism. N-linked (GlcNAc...) asparagine glycosylation occurs at asparagine 257.

The protein belongs to the patatin family. Post-translationally, N-glycosylated. In terms of tissue distribution, tuber.

It localises to the vacuole. The protein is Probable inactive patatin-3-Kuras 1 (pat3-k1) of Solanum tuberosum (Potato).